We begin with the raw amino-acid sequence, 234 residues long: Thymidine kinase, cytosolic (234 aa).

Residue serine 2 is modified to N-acetylserine. A phosphoserine mark is found at serine 2 and serine 13. ATP contacts are provided by residues 26–33 (GPMFSGKS), 58–60 (DTR), and 97–100 (DEGQ). Glutamate 98 (proton acceptor) is an active-site residue. Substrate is bound at residue phenylalanine 128. The Zn(2+) site is built by cysteine 153 and cysteine 156. Residues 172–176 (VEVIG) and tyrosine 181 contribute to the substrate site. Zn(2+)-binding residues include cysteine 185 and cysteine 188. The KEN box motif lies at 203–205 (KEN). A Phosphoserine modification is found at serine 231.

The protein belongs to the thymidine kinase family. Homotetramer. Tetramerization from dimerization is induced by ATP and increases catalytic efficiency due to a high affinity for thymidine. Tetramerization is inhibited by phosphorylation at Ser-13. Interacts (via the KEN box) with FZR1. Post-translationally, phosphorylated on Ser-13 in mitosis. Phosphorylation of Ser-13 by CDK1 during mitosis reduces homotetramerization and catalytic efficiency when DNA replication is complete and intracellular TK1 is still present at a high level. In terms of processing, polyubiquitinated. Postmitosis, ubiquitination leads to proteasomal degradation. The KEN box sequence located at the C-terminal region targets for degradation by the anaphase promoting complex (APC/C) activated and rate-limited by FZR1.

Its subcellular location is the cytoplasm. It catalyses the reaction thymidine + ATP = dTMP + ADP + H(+). Functionally, cell-cycle-regulated enzyme of importance in nucleotide metabolism. Catalyzes the first enzymatic step in the salvage pathway converting thymidine into thymidine monophosphate. Transcriptional regulation limits expression to the S phase of the cell cycle and transient expression coincides with the oscillation in the intracellular dTTP concentration. Also important for the activation of anticancer and antiviral nucleoside analog prodrugs such as 1-b-d-arabinofuranosylcytosine (AraC) and 3c-azido-3c-deoxythymidine (AZT). In Homo sapiens (Human), this protein is Thymidine kinase, cytosolic.